Consider the following 407-residue polypeptide: Succinate--CoA ligase [ADP-forming] subunit beta, hydrogenosomal (407 aa).

The transit peptide at 1–9 directs the protein to the hydrogenosome; it reads MLSSSFARN. One can recognise an ATP-grasp domain in the interval 18–261; sequence KEICAKYNVA…LKQVNPFEIR (244 aa). ATP contacts are provided by residues Lys-55, 62-64, and Glu-124; that span reads GRG. Asn-216 and Asp-230 together coordinate Mg(2+). Substrate contacts are provided by residues Asn-281 and 338 to 340; that span reads GIV.

It belongs to the succinate/malate CoA ligase beta subunit family. Heterodimer of an alpha and a beta subunit. Mg(2+) is required as a cofactor.

It is found in the hydrogenosome. It catalyses the reaction succinate + ATP + CoA = succinyl-CoA + ADP + phosphate. Its pathway is carbohydrate metabolism; tricarboxylic acid cycle; succinate from succinyl-CoA (ligase route): step 1/1. Succinyl-CoA synthetase functions in the citric acid cycle (TCA), coupling the hydrolysis of succinyl-CoA to the synthesis of ATP and thus represents the only step of substrate-level phosphorylation in the TCA. The beta subunit provides nucleotide specificity of the enzyme and binds the substrate succinate, while the binding sites for coenzyme A and phosphate are found in the alpha subunit. The polypeptide is Succinate--CoA ligase [ADP-forming] subunit beta, hydrogenosomal (Trichomonas vaginalis).